The primary structure comprises 567 residues: Major facilitator superfamily transporter MG061 (567 aa).

Transmembrane regions (helical) follow at residues 15 to 35, 78 to 98, 104 to 124, 193 to 213, 230 to 250, 264 to 284, 321 to 341, 363 to 383, 405 to 425, 426 to 446, 462 to 482, and 503 to 523; these read ITLW…WFVI, WTIT…VLKF, VLIM…GDPL, GYAL…TLVV, ILSN…FTPF, VYIM…FLWF, LIGV…PAWF, TGLA…FVVF, IVVL…SAAG, FALI…LSSS, LPIL…LFDI, and PGVI…NLIV.

Belongs to the major facilitator superfamily.

The protein localises to the cell membrane. This chain is Major facilitator superfamily transporter MG061, found in Mycoplasma genitalium (strain ATCC 33530 / DSM 19775 / NCTC 10195 / G37) (Mycoplasmoides genitalium).